The primary structure comprises 600 residues: Alpha pinene synthase, chloroplastic (600 aa).

Residues 1 to 27 are disordered; it reads MSSISMHAGPLNISAANNHHPSWDRRV. The N-terminal 31 residues, 1–31, are a transit peptide targeting the chloroplast; that stretch reads MSSISMHAGPLNISAANNHHPSWDRRVSKPR. Mg(2+) is bound by residues Asp354, Asp358, Asp498, and Glu506. The DDXXD motif motif lies at 354–358; the sequence is DDVYD.

Belongs to the terpene synthase family. Tpsa subfamily. It depends on Mg(2+) as a cofactor. Requires Mn(2+) as cofactor. As to expression, expressed at low levels in leaves.

It is found in the plastid. Its subcellular location is the chloroplast. It carries out the reaction (2E)-geranyl diphosphate = alpha-pinene + diphosphate. It participates in secondary metabolite biosynthesis; terpenoid biosynthesis. In terms of biological role, monoterpene synthase involved in the biosynthesis of volatile compounds widely used in aromatherapy and folk medicine, and present in culinary herbs. Mediates the conversion of (2E)-geranyl diphosphate (GPP) into alpha-pinene and, as minor compounds, into alpha-phellandrene, limonene and alpha-terpinolene. This chain is Alpha pinene synthase, chloroplastic, found in Lavandula viridis (Green lavender).